The following is a 581-amino-acid chain: uncharacterized protein (581 aa).

Belongs to the UbiD family.

This is an uncharacterized protein from Chlamydia caviae (strain ATCC VR-813 / DSM 19441 / 03DC25 / GPIC) (Chlamydophila caviae).